The primary structure comprises 291 residues: MTTLAIDIGGTKLAAALIGADGQIRDRRELPTPASQTPEALRDALSALVSPLQAHAQRVAIASTGIIRDGSLLALNPHNLGGLLHFPLVKTLEQLTNLPTIAINDAQAAAWAEFQALDGDITDMVFITVSTGVGGGVVSGCKLLTGPGGLAGHIGHTLADPHGPVCGCGRTGCVEAIASGRGIAAAAQGELAGADAKTIFTRAGQGDEQAQQLIHRSARTLARLIADIKATTDCQCVVVGGSVGLAEGYLALVETYLAQEPAAFHVDLLAAHYRHDAGLLGAALLAQGEKL.

Residues Ala5 to Lys12 and Gly132 to Ser139 each bind ATP. 4 residues coordinate Zn(2+): His156, Cys166, Cys168, and Cys173.

The protein belongs to the ROK (NagC/XylR) family. NanK subfamily. In terms of assembly, homodimer.

It catalyses the reaction an N-acyl-D-mannosamine + ATP = an N-acyl-D-mannosamine 6-phosphate + ADP + H(+). It functions in the pathway amino-sugar metabolism; N-acetylneuraminate degradation; D-fructose 6-phosphate from N-acetylneuraminate: step 2/5. Its function is as follows. Catalyzes the phosphorylation of N-acetylmannosamine (ManNAc) to ManNAc-6-P. The protein is N-acetylmannosamine kinase of Escherichia coli (strain K12 / MC4100 / BW2952).